We begin with the raw amino-acid sequence, 548 residues long: Undecaprenyl phosphate-alpha-4-amino-4-deoxy-L-arabinose arabinosyl transferase 1 (548 aa).

Helical transmembrane passes span 11–31, 89–109, 114–134, 137–157, 180–200, 214–234, 263–283, 292–312, 314–334, 347–367, 382–402, and 405–425; these read WLLF…TRLL, IVVV…AMVV, ALAF…AIGT, ILDP…LVAL, FLTK…VMAI, IALL…ALQA, FYIP…FGAL, GTLY…ASKG, LLTY…HYIE, VNAS…IYSL, KIVL…GALF, and TQFL…YAIP.

It belongs to the glycosyltransferase 83 family.

It is found in the cell inner membrane. The enzyme catalyses 4-amino-4-deoxy-alpha-L-arabinopyranosyl di-trans,octa-cis-undecaprenyl phosphate + lipid IVA = lipid IIA + di-trans,octa-cis-undecaprenyl phosphate.. The protein operates within lipopolysaccharide metabolism; 4-amino-4-deoxy-beta-L-arabinose-lipid A biosynthesis. Catalyzes the transfer of the L-Ara4N moiety of the glycolipid undecaprenyl phosphate-alpha-L-Ara4N to lipid A. The modified arabinose is attached to lipid A and is required for resistance to polymyxin and cationic antimicrobial peptides. The sequence is that of Undecaprenyl phosphate-alpha-4-amino-4-deoxy-L-arabinose arabinosyl transferase 1 from Proteus mirabilis (strain HI4320).